Here is a 432-residue protein sequence, read N- to C-terminus: Crenactin (432 aa).

ATP contacts are provided by residues 20 to 24 (TSYVK), 182 to 184 (GGH), 235 to 239 (EVVKR), 354 to 358 (GAFSW), and Q399.

This sequence belongs to the actin family. Monomer. The crenactin monomers polymerize into right-handed helical filaments, with 8 subunits per complete turn of the helix. Forms single-stranded filaments under high salt concentrations and double-stranded filaments under low salt concentrations. Interacts with arcadin-1 and arcadin-2.

It localises to the cytoplasm. It is found in the cytoskeleton. It catalyses the reaction ATP + H2O = ADP + phosphate + H(+). Crenactin polymerization is inhibited by interaction with arcadin-2. Also significantly inhibited by elevated antibiotic A22 concentrations. Its function is as follows. Forms the backbone of an actin-like archaeal cytoskeleton, which is involved in cell shape determination. Has ATPase activity. Shows highest activity towards ATP or GTP as nucleotide, and only residual activity on UTP, CTP and dNTPs. This chain is Crenactin, found in Pyrobaculum calidifontis (strain DSM 21063 / JCM 11548 / VA1).